The primary structure comprises 173 residues: Ribosome maturation factor RimM (173 aa).

In terms of domain architecture, PRC barrel spans 98–170 (EDEYYWCDLL…RMTVSLPEGL (73 aa)).

Belongs to the RimM family. Binds ribosomal protein uS19.

It is found in the cytoplasm. In terms of biological role, an accessory protein needed during the final step in the assembly of 30S ribosomal subunit, possibly for assembly of the head region. Essential for efficient processing of 16S rRNA. May be needed both before and after RbfA during the maturation of 16S rRNA. It has affinity for free ribosomal 30S subunits but not for 70S ribosomes. This chain is Ribosome maturation factor RimM, found in Geotalea uraniireducens (strain Rf4) (Geobacter uraniireducens).